Reading from the N-terminus, the 32-residue chain is Corticostatin-related peptide RK-1 (32 aa).

3 disulfide bridges follow: Cys3–Cys29, Cys5–Cys19, and Cys9–Cys28.

Its subcellular location is the secreted. Functionally, has antimicrobial activity against E.coli and activates ion channel activity. The sequence is that of Corticostatin-related peptide RK-1 from Oryctolagus cuniculus (Rabbit).